A 970-amino-acid chain; its full sequence is MDRGLSTGAHQGDDGLRERTVASQSSSAPGLEALTATGEGEVKDKAGKGKKTYGRTPGGKVFTVPQTHDMVSQLLSPSEPKNLSDIIVLVILAAHILLLWRLPAGAKVPVFAFIYLFWRGAYNAGIGWLLHNQSNHRTLVRWAEKTKIFVNPATGQNSHANLYKLIKRELKTKIPADYSFEDAPIEYNTWLVFRRLVDLILMCDFTSYCLFAIACSQRPLDEGTLMTALRWSAGIILVLFNLWVKLDAHRVVKDYAWYWGDFFFLIDQELTFDGVFEMAPHPMYSVGYAGYYGISLMAASYKVLFISILAHAAQFAFLVFVENPHIEKTYNPPPPRKRTIDQENVSITPQRSDSPSAPAPLDEQVPHAPSYSSGPPPSVHNLLGFRNLDLYRTIDTSSILIQFLVFALTVLTPSTPWFQFLFVANAAVWRIWYSVGIGLVLDRQSNCKAWTRHFVKYGESPQEAWNQWKGTYHISMVMCYASFIAAVWKMYSFPADWGYGLVLLRHVLGAGLIALQIWTSVSIYESLGEFGWFYGDFFFDESPKLTYDGIYRFLNNPERVLGLAGVWGAVLITSSGAVTFLALMSHILSLGFIQFVERPHMQKLYGRSLRRDAGLTKSLKRSLPPSLQQLHGSVDKIFDESFEFIEELIDTARPKLAAGVNTFVKDTSALFQKYPARVTISRIDEDLAGYDSRDYSLEVEGTDSLSPNDNDQSGREGANARMPLDRRGDLKNLVFEYGSPIKVKWTAPLNHSKKDWIGLYRVTDNTSREVTRVSSQGRWIAVNEGSYDNLTCEKGIVSSDILIPASQRKDNENRDLASGEVIFSGDKLFWTQGVFEFRYHHNGKHNVMAISRPFEIRISRFDEDEIPLMDPTSVELSLFPVVRNCFDRDPQIAPETVDEPFGSLVERDGRYAKRIVFAVHQMFGIEFAPEVVKADGNVHNLARRICNAKRVLAPYSLTKNGATTPTEGKE.

The segment at M1–G59 is disordered. Topologically, residues M1–D85 are lumenal. A compositionally biased stretch (basic and acidic residues) spans Q11–T20. The helical transmembrane segment at I86–A106 threads the bilayer. Over K107–P109 the chain is Cytoplasmic. A helical membrane pass occupies residues V110–L130. Over H131–R195 the chain is Lumenal. Residues L196–S216 form a helical membrane-spanning segment. The Cytoplasmic portion of the chain corresponds to Q217 to G223. Residues T224–V244 form a helical membrane-spanning segment. Residues K245–E277 lie on the Lumenal side of the membrane. The chain crosses the membrane as a helical span at residues M278–A298. The Cytoplasmic portion of the chain corresponds to A299–S300. Residues Y301–V321 traverse the membrane as a helical segment. At E322 to D389 the chain is on the lumenal side. Positions Y330–P375 are disordered. Polar residues predominate over residues Q342 to P355. Residues L390 to L411 form a helical membrane-spanning segment. Over T412–P416 the chain is Cytoplasmic. Residues W417 to L441 traverse the membrane as a helical segment. Topologically, residues D442–H473 are lumenal. A helical transmembrane segment spans residues I474 to P494. Residues A495–D496 lie on the Cytoplasmic side of the membrane. A helical transmembrane segment spans residues W497–I517. The Lumenal portion of the chain corresponds to W518–G562. The helical transmembrane segment at L563–L583 threads the bilayer. Residues M584–E970 are Cytoplasmic-facing. A disordered region spans residues E698–M722.

Belongs to the class VI-like SAM-binding methyltransferase superfamily. CHO2 family.

It localises to the endoplasmic reticulum membrane. It carries out the reaction a 1,2-diacyl-sn-glycero-3-phosphoethanolamine + S-adenosyl-L-methionine = a 1,2-diacyl-sn-glycero-3-phospho-N-methylethanolamine + S-adenosyl-L-homocysteine + H(+). It participates in phospholipid metabolism; phosphatidylcholine biosynthesis. Functionally, catalyzes the first step of the methylation pathway of phosphatidylcholine biosynthesis, the SAM-dependent methylation of phosphatidylethanolamine (PE) to phosphatidylmonomethylethanolamine (PMME). The sequence is that of Phosphatidylethanolamine N-methyltransferase (CHO2) from Neosartorya fischeri (strain ATCC 1020 / DSM 3700 / CBS 544.65 / FGSC A1164 / JCM 1740 / NRRL 181 / WB 181) (Aspergillus fischerianus).